A 474-amino-acid chain; its full sequence is Probable periplasmic serine endoprotease DegP-like (474 aa).

The first 26 residues, 1–26 (MTRMTRHLALWMLLSLAILASQSAMA), serve as a signal peptide directing secretion. Active-site charge relay system residues include H116, D146, and S219. Substrate contacts are provided by residues 217-219 (GNS) and 274-278 (LGVMI). PDZ domains follow at residues 263-354 (LRND…LRNG) and 360-462 (TVTV…YRSG).

Belongs to the peptidase S1C family.

It is found in the periplasm. It catalyses the reaction Acts on substrates that are at least partially unfolded. The cleavage site P1 residue is normally between a pair of hydrophobic residues, such as Val-|-Val.. Its function is as follows. Might be efficient in the degradation of transiently denatured and unfolded proteins which accumulate in the periplasm following stress conditions. The protein is Probable periplasmic serine endoprotease DegP-like (mucD) of Halomonas elongata (strain ATCC 33173 / DSM 2581 / NBRC 15536 / NCIMB 2198 / 1H9).